Here is an 861-residue protein sequence, read N- to C-terminus: Methyltransferase/ribosomally synthesized type III borosin cyclic peptide precursor aboMAa (861 aa).

A methyltransferase domain region spans residues Met-1–Lys-279. Catalysis depends on residues Arg-100, Tyr-104, and Tyr-126. Residues Tyr-126, His-128, Val-131, Ala-158, Gln-200, Ala-241, Ser-272, and Thr-273 each contribute to the S-adenosyl-L-methionine site. Residues Ala-280 to Ser-408 form a clasp domain region. Positions Pro-409–Pro-799 are type III-specific C-terminal domain. Disordered regions lie at residues Asn-575–Gly-596 and Glu-772–Ala-801. The span at Pro-579–Ser-593 shows a compositional bias: gly residues. Basic and acidic residues predominate over residues Glu-772–Glu-783. Positions Lys-784–Pro-797 are enriched in acidic residues. N-methylvaline occurs at positions 805 and 807. Tandem repeats lie at residues Val-805–Asp-809, Val-810–Asp-814, Val-815–Asp-819, Val-820–Asp-824, Val-825–Asp-829, Val-830–Asp-834, Val-835–Asp-839, Val-840–Asp-844, and Val-845–Asp-849. Residues Val-805 to Asp-854 form a 10 X 5 AA tandem repeats of VDVTD region. Thr-808 is subject to N-methylthreonine. 2 positions are modified to N-methylvaline: Val-810 and Val-812. Thr-813 carries the N-methylthreonine modification. An N-methylvaline mark is found at Val-815 and Val-817. Residue Thr-818 is modified to N-methylthreonine. An N-methylvaline mark is found at Val-820 and Val-822. Thr-823 carries the N-methylthreonine modification. An N-methylvaline mark is found at Val-825 and Val-827. At Thr-828 the chain carries N-methylthreonine. 2 positions are modified to N-methylvaline: Val-830 and Val-832. Thr-833 is subject to N-methylthreonine. One copy of the 10; approximate repeat lies at Val-850–Asp-854.

In the N-terminal section; belongs to the precorrin methyltransferase family. AboMA automethylates at Val-805, Val-807, Thr-808, Val-810, Val-812, Thr-813, Val-815, Val-817, Thr-818, Val-820, Val-822, Thr-823, Val-825, Val-827 and Thr-828, Val-830, Val-832 and T-833 before being processed by a prolyloligopeptidase which likely forms a peptidyl ester upon removal of the follower propeptide, which then undergoes macrocyclization with the N-terminus of the modified core peptide. Peptide backbone alpha-N-methylations change the physicochemical properties of amide bonds to provide structural constraints and other favorable characteristics including biological membrane permeability to peptides.

It functions in the pathway secondary metabolite biosynthesis. Functionally, fusion protein of the methyltransferase aboM and a type III borosin core peptide; part of the gene cluster that mediates the biosynthesis of a type III borosin, a highly methylated cyclic peptide with potent biological activities. Type III borosins derive from the C-terminus of the fusion protein, and it is the same protein that methylates its own C-terminus using S-adenosyl methionine (SAM). The C-terminus is subsequently cleaved off and macrocyclized by a prolyloligopeptidase to give the final product. This is Methyltransferase/ribosomally synthesized type III borosin cyclic peptide precursor aboMAa from Anomoporia bombycina (Polyporus bombycinus).